We begin with the raw amino-acid sequence, 118 residues long: Large ribosomal subunit protein bL20 (118 aa).

It belongs to the bacterial ribosomal protein bL20 family.

Binds directly to 23S ribosomal RNA and is necessary for the in vitro assembly process of the 50S ribosomal subunit. It is not involved in the protein synthesizing functions of that subunit. The protein is Large ribosomal subunit protein bL20 of Thermosipho melanesiensis (strain DSM 12029 / CIP 104789 / BI429).